We begin with the raw amino-acid sequence, 118 residues long: Ribonuclease P protein component (118 aa).

Belongs to the RnpA family. Consists of a catalytic RNA component (M1 or rnpB) and a protein subunit.

The enzyme catalyses Endonucleolytic cleavage of RNA, removing 5'-extranucleotides from tRNA precursor.. Functionally, RNaseP catalyzes the removal of the 5'-leader sequence from pre-tRNA to produce the mature 5'-terminus. It can also cleave other RNA substrates such as 4.5S RNA. The protein component plays an auxiliary but essential role in vivo by binding to the 5'-leader sequence and broadening the substrate specificity of the ribozyme. In Rickettsia akari (strain Hartford), this protein is Ribonuclease P protein component.